Reading from the N-terminus, the 149-residue chain is MQIWVDADACPSVIKDVLFRVADRLQVQVTLVANKLLRTPPSRFIRAIQVPAGFDVADNEIVRLVQEGDLVITGDIPLAADVLEKGGLPLNPRGEFYTKDTIQQQLTMRTFMDELRSSGVDTGGPAAFSQSDTRNFANQLDRFLTRTGK.

It belongs to the UPF0178 family.

The sequence is that of UPF0178 protein HEAR0259 from Herminiimonas arsenicoxydans.